Consider the following 152-residue polypeptide: Small ribosomal subunit protein uS11A (152 aa).

Residues 131–152 are disordered; that stretch reads EDVTPIPSDSTRRKGGRRGRRL. Basic residues predominate over residues 143–152; it reads RKGGRRGRRL.

Belongs to the universal ribosomal protein uS11 family.

This is Small ribosomal subunit protein uS11A from Anopheles gambiae (African malaria mosquito).